Reading from the N-terminus, the 198-residue chain is Recombination protein RecR (198 aa).

The segment at 57-72 adopts a C4-type zinc-finger fold; sequence CSECQTLTDKDPCAVC. Residues 80–175 form the Toprim domain; the sequence is RIICVVEGVP…KVTRIAQGIP (96 aa).

It belongs to the RecR family.

May play a role in DNA repair. It seems to be involved in an RecBC-independent recombinational process of DNA repair. It may act with RecF and RecO. The sequence is that of Recombination protein RecR from Anaeromyxobacter sp. (strain Fw109-5).